Here is a 206-residue protein sequence, read N- to C-terminus: Stage III sporulation protein AF (206 aa).

Transmembrane regions (helical) follow at residues 1–21 and 34–54; these read MSFL…AIVI and AKMV…FKLF.

The protein resides in the cell membrane. This is Stage III sporulation protein AF (spoIIIAF) from Bacillus subtilis (strain 168).